We begin with the raw amino-acid sequence, 120 residues long: Large ribosomal subunit protein uL24 (120 aa).

The protein belongs to the universal ribosomal protein uL24 family. As to quaternary structure, part of the 50S ribosomal subunit.

Functionally, one of two assembly initiator proteins, it binds directly to the 5'-end of the 23S rRNA, where it nucleates assembly of the 50S subunit. In terms of biological role, located at the polypeptide exit tunnel on the outside of the subunit. The sequence is that of Large ribosomal subunit protein uL24 from Methanocaldococcus jannaschii (strain ATCC 43067 / DSM 2661 / JAL-1 / JCM 10045 / NBRC 100440) (Methanococcus jannaschii).